The following is a 102-amino-acid chain: Small ribosomal subunit protein uS10 (102 aa).

Belongs to the universal ribosomal protein uS10 family. Part of the 30S ribosomal subunit.

Functionally, involved in the binding of tRNA to the ribosomes. The sequence is that of Small ribosomal subunit protein uS10 from Staphylococcus aureus (strain JH9).